Here is a 111-residue protein sequence, read N- to C-terminus: Photosystem II reaction center Psb28 protein (111 aa).

The protein belongs to the Psb28 family. As to quaternary structure, part of the photosystem II complex.

It localises to the cellular thylakoid membrane. The protein is Photosystem II reaction center Psb28 protein of Acaryochloris marina (strain MBIC 11017).